The sequence spans 576 residues: Putative SPbeta prophage-derived single-strand DNA-specific exonuclease YorK (576 aa).

A Phosphotyrosine modification is found at Y473.

Belongs to the RecJ family.

Functionally, putative single-stranded-DNA-specific exonuclease. This chain is Putative SPbeta prophage-derived single-strand DNA-specific exonuclease YorK (yorK), found in Bacillus subtilis (strain 168).